We begin with the raw amino-acid sequence, 183 residues long: Endoribonuclease YbeY (183 aa).

Residues His-118, His-122, and His-128 each coordinate Zn(2+). The segment at 156–183 is disordered; that stretch reads EREQAQRSADSAVLGAVGLEEQDGPGTH.

This sequence belongs to the endoribonuclease YbeY family. Zn(2+) serves as cofactor.

The protein localises to the cytoplasm. In terms of biological role, single strand-specific metallo-endoribonuclease involved in late-stage 70S ribosome quality control and in maturation of the 3' terminus of the 16S rRNA. In Saccharopolyspora erythraea (strain ATCC 11635 / DSM 40517 / JCM 4748 / NBRC 13426 / NCIMB 8594 / NRRL 2338), this protein is Endoribonuclease YbeY.